The chain runs to 871 residues: Transient receptor potential cation channel subfamily V member 4 (871 aa).

Disordered regions lie at residues 1–68 (MADP…PNLR) and 110–143 (YGTY…PQPP). Residues 1 to 469 (MADPGDGPRA…RDKWRKFGAV (469 aa)) are Cytoplasmic-facing. Tyr110 carries the phosphotyrosine; by SRC-type Tyr-kinases modification. Residues 116 to 129 (HPSDNKRWRRKVVE) are compositionally biased toward basic and acidic residues. ATP is bound by residues Lys192, Lys197, Asn201, 236–239 (YRGQ), and Arg248. 2 ANK repeats span residues 237–266 (RGQT…DVHA) and 284–313 (FGEL…KKAD). Residue 249 to 251 (RCK) coordinates a 1,2-diacyl-sn-glycero-3-phospho-(1D-myo-inositol-4,5-bisphosphate). A Phosphotyrosine; by LYN modification is found at Tyr253. A 1,2-diacyl-sn-glycero-3-phospho-(1D-myo-inositol-4,5-bisphosphate) is bound by residues 296-299 (NQPH) and Lys344. The stretch at 369-398 (DGLSPLMMAAKTGKIGVFQHIIRREVTDED) is one ANK 3 repeat. Residues 470 to 490 (SFYINVVSYLCAMVIFTLTAY) form a helical membrane-spanning segment. The Extracellular portion of the chain corresponds to 491–507 (YQPLEGTPPYPYRTTVD). The chain crosses the membrane as a helical span at residues 508–534 (YLRLAGEVITLFTGVLFFFTSIKDLFT). Topologically, residues 535 to 547 (KKCPGVNSLFVDG) are cytoplasmic. The chain crosses the membrane as a helical span at residues 548–568 (SFQLLYFIYSVLVVVSAALYL). Residues 569–572 (AGIE) are Extracellular-facing. The helical transmembrane segment at 573–593 (AYLAVMVFALVLGWMNALYFT) threads the bilayer. Over 594 to 608 (RGLKLTGTYSIMIQK) the chain is Cytoplasmic. A helical transmembrane segment spans residues 609–636 (ILFKDLFRFLLVYLLFMIGYASALVTLL). The Extracellular segment spans residues 637 to 665 (NPCTNMKVCDEDQSNCTVPTYPACRDSET). Asn651 carries an N-linked (GlcNAc...) asparagine glycan. Positions 666–685 (FSAFLLDLFKLTIGMGDLEM) form an intramembrane region, pore-forming. A Selectivity filter motif is present at residues 679-682 (GMGD). Asp682 provides a ligand contact to Ca(2+). Over 686–693 (LSSAKYPV) the chain is Extracellular. Residues 694-722 (VFILLLVTYIILTFVLLLNMLIALMGETV) traverse the membrane as a helical segment. The Cytoplasmic segment spans residues 723-871 (GQVSKESKHI…PKWRTDDAPL (149 aa)). The residue at position 805 (Tyr805) is a Phosphotyrosine; by SRC-type Tyr-kinases. An interaction with calmodulin and ITPR3 region spans residues 812 to 831 (HTVGRLRRDRWSSVVPRVVE). Position 824 is a phosphoserine; by PKC and PKA (Ser824). Positions 850–871 (NPNCDGHQQGYAPKWRTDDAPL) are disordered.

Belongs to the transient receptor (TC 1.A.4) family. TrpV subfamily. TRPV4 sub-subfamily. Homotetramer. Interacts with calmodulin. Interacts with CTNNB1. The TRPV4 and CTNNB1 complex can interact with CDH1. Part of a complex containing MLC1, AQP4, HEPACAM and ATP1B1. Interacts with MAP7 and Src family Tyr protein kinases LYN, SRC, FYN, HCK, LCK and YES. Interacts with PACSIN1, PACSIN2 and PACSIN3 (via SH3 domain). Interacts with ITPR3. Interacts with AQP5; the interaction is probably indirect and regulates TRPV4 activation by hypotonicity. Interacts with ANO1. Interacts (via C-terminus) with PKD2 (via C-terminus). Interacts with DDX3X; this interaction is decreased when the channel is activated. Post-translationally, N-glycosylated. In terms of tissue distribution, detected in liver, kidney, heart, brain cortex, cerebellum and brainstem (at protein level). Expressed in salivary glands (at protein level). Expressed in heart, lung, spleen, liver, kidney, brain, skeletal muscle and testis. In the central nervous system, expressed in the lamina terminalis (arched vascular organ and neurons of the subfornical organ), median preoptic area, ventral hippocampal commissure, and ependymal cells of the choroid plexus. In the cochlea, expressed in both inner and outer hair cells, and in marginal cells of the cochlear stria vascularis. Expressed in large neurons of the trigeminal ganglion. In the kidney cortex, strongly expressed by epithelial cells of tubules and much weaker in glomeruli.

The protein resides in the cell membrane. It localises to the apical cell membrane. The protein localises to the cell junction. Its subcellular location is the adherens junction. It is found in the cell projection. The protein resides in the cilium. The enzyme catalyses Ca(2+)(in) = Ca(2+)(out). In terms of biological role, non-selective calcium permeant cation channel involved in osmotic sensitivity and mechanosensitivity. Activation by exposure to hypotonicity within the physiological range exhibits an outward rectification. Also activated by heat, low pH, citrate and phorbol esters. Increase of intracellular Ca(2+) potentiates currents. Channel activity seems to be regulated by a calmodulin-dependent mechanism with a negative feedback mechanism. Acts as a regulator of intracellular Ca(2+) in synoviocytes. Plays an obligatory role as a molecular component in the nonselective cation channel activation induced by 4-alpha-phorbol 12,13-didecanoate and hypotonic stimulation in synoviocytes and also regulates production of IL-8. Together with PKD2, forms mechano- and thermosensitive channels in cilium. Promotes cell-cell junction formation in skin keratinocytes and plays an important role in the formation and/or maintenance of functional intercellular barriers. Negatively regulates expression of PPARGC1A, UCP1, oxidative metabolism and respiration in adipocytes. Regulates expression of chemokines and cytokines related to pro-inflammatory pathway in adipocytes. Together with AQP5, controls regulatory volume decrease in salivary epithelial cells. Required for normal development and maintenance of bone and cartilage. In its inactive state, may sequester DDX3X at the plasma membrane. When activated, the interaction between both proteins is affected and DDX3X relocalizes to the nucleus. In neurons of the central nervous system, could play a role in triggering voluntary water intake in response to increased sodium concentration in body fluid. The chain is Transient receptor potential cation channel subfamily V member 4 (Trpv4) from Mus musculus (Mouse).